The primary structure comprises 224 residues: Deoxyribose-phosphate aldolase (224 aa).

Catalysis depends on D93, which acts as the Proton donor/acceptor. K159 (schiff-base intermediate with acetaldehyde) is an active-site residue. Residue K189 is the Proton donor/acceptor of the active site.

This sequence belongs to the DeoC/FbaB aldolase family. DeoC type 1 subfamily.

The protein localises to the cytoplasm. It carries out the reaction 2-deoxy-D-ribose 5-phosphate = D-glyceraldehyde 3-phosphate + acetaldehyde. It participates in carbohydrate degradation; 2-deoxy-D-ribose 1-phosphate degradation; D-glyceraldehyde 3-phosphate and acetaldehyde from 2-deoxy-alpha-D-ribose 1-phosphate: step 2/2. Catalyzes a reversible aldol reaction between acetaldehyde and D-glyceraldehyde 3-phosphate to generate 2-deoxy-D-ribose 5-phosphate. The polypeptide is Deoxyribose-phosphate aldolase (Mycobacterium bovis (strain ATCC BAA-935 / AF2122/97)).